The chain runs to 194 residues: Lachesicidin (194 aa).

A signal peptide spans 1–22; that stretch reads MQGFFWKTWLVLAVCGTPASLA. Residues 23-160 constitute a propeptide that is removed on maturation; the sequence is HRPLSYGEAL…DEEKDQPKRV (138 aa). 2 disulfide bridges follow: Cys-79/Cys-90 and Cys-101/Cys-118. Positions 125–154 are enriched in acidic residues; sequence EEEEEEEEEEQKAEAENDEEVEKEKEDEEK. A disordered region spans residues 125–157; the sequence is EEEEEEEEEEQKAEAENDEEVEKEKEDEEKDQP.

Belongs to the cathelicidin family. In terms of tissue distribution, expressed by the venom gland.

The protein localises to the secreted. Its subcellular location is the target cell membrane. In terms of biological role, potent antimicrobial peptide against Gram-negative and Gram-positive bacteria. Adopts an amphipathic alpha helical conformation, that may allow to partition into the target membrane. Low hemolytic activities have been observed on mammalian cells. The protein is Lachesicidin of Lachesis muta rhombeata (Bushmaster).